Consider the following 285-residue polypeptide: Glutamate racemase (285 aa).

Substrate-binding positions include 30-31 (DS) and 62-63 (YG). The active-site Proton donor/acceptor is C94. A substrate-binding site is contributed by 95–96 (NT). Catalysis depends on C206, which acts as the Proton donor/acceptor. 207–208 (TH) provides a ligand contact to substrate.

Belongs to the aspartate/glutamate racemases family.

It carries out the reaction L-glutamate = D-glutamate. It functions in the pathway cell wall biogenesis; peptidoglycan biosynthesis. In terms of biological role, provides the (R)-glutamate required for cell wall biosynthesis. This Pectobacterium carotovorum subsp. carotovorum (strain PC1) protein is Glutamate racemase.